The primary structure comprises 335 residues: MKLEFAPINIPLARRLQTTAVFQWVFSFLLLAQCCIGIFLSLVLARLWLILALYVLWLYLDWETPQAGGRRWEWVRNWTVWKYFKDYFPIRLVKTCDLDPQHNYIMGFHPHGVLVAGAFGNFCTNYTGFKELFPGLTPYLHILPFWFRCPFFREYAMCVGLVSATKKSVNHVLSKENGGNISIIVIGGAEESLDAHPGSLILHILKRKGFIKVAFKQGAHLVPVFSFGENELFQQVPNPKGSFLRCVQERLQKIMGFAMPLFHARGIFQYSFGLMPYRMPIHTVVGRPIPVKQTSHPTQEEIESLHQQYLSALRDLFEEHKERYGIPEHESLIFT.

The next 2 membrane-spanning stretches (helical) occupy residues 24 to 44 and 47 to 67; these read WVFS…SLVL and LWLI…TPQA. Residues asparagine 77, asparagine 125, and asparagine 180 are each glycosylated (N-linked (GlcNAc...) asparagine).

This sequence belongs to the diacylglycerol acyltransferase family.

The protein localises to the endoplasmic reticulum membrane. The catalysed reaction is a 2-acylglycerol + an acyl-CoA = a 1,2-diacylglycerol + CoA. The enzyme catalyses a 2-acylglycerol + an acyl-CoA = a 1,2-diacyl-sn-glycerol + CoA. It catalyses the reaction a 2-acylglycerol + an acyl-CoA = a 2,3-diacyl-sn-glycerol + CoA. It carries out the reaction a 1-acylglycerol + an acyl-CoA = a 1,2-diacylglycerol + CoA. The catalysed reaction is a 1-acylglycerol + an acyl-CoA = a 1,3-diacylglycerol + CoA. The enzyme catalyses a 1-acyl-sn-glycerol + an acyl-CoA = a 1,3-diacyl-sn-glycerol + CoA. It catalyses the reaction a 3-acyl-sn-glycerol + an acyl-CoA = a 1,3-diacyl-sn-glycerol + CoA. Its pathway is glycerolipid metabolism; triacylglycerol biosynthesis. Functionally, involved in glycerolipid synthesis and lipid metabolism. Catalyzes the formation of diacylglycerol, the precursor of triacylglycerol, by transferring the acyl chain of a fatty acyl-CoA to a monoacylglycerol, mainly at the sn-1 or sn-3 positions. It uses both sn-2-monoacylglycerol (2-acylglycerol) and sn-1-monoacylglycerol (1-acyl-sn-glycerol) equally well as substrates, and uses sn-3-monoacylglycerol (3-acyl-sn-glycerol) with lower efficiency. This is 2-acylglycerol O-acyltransferase 1 (mogat1) from Xenopus tropicalis (Western clawed frog).